Reading from the N-terminus, the 241-residue chain is Ubiquinone biosynthesis O-methyltransferase (241 aa).

Residues Arg46, Gly66, Asp87, and Met131 each coordinate S-adenosyl-L-methionine.

This sequence belongs to the methyltransferase superfamily. UbiG/COQ3 family.

The enzyme catalyses a 3-demethylubiquinol + S-adenosyl-L-methionine = a ubiquinol + S-adenosyl-L-homocysteine + H(+). It catalyses the reaction a 3-(all-trans-polyprenyl)benzene-1,2-diol + S-adenosyl-L-methionine = a 2-methoxy-6-(all-trans-polyprenyl)phenol + S-adenosyl-L-homocysteine + H(+). The protein operates within cofactor biosynthesis; ubiquinone biosynthesis. Functionally, O-methyltransferase that catalyzes the 2 O-methylation steps in the ubiquinone biosynthetic pathway. This chain is Ubiquinone biosynthesis O-methyltransferase, found in Bordetella bronchiseptica (strain ATCC BAA-588 / NCTC 13252 / RB50) (Alcaligenes bronchisepticus).